The chain runs to 157 residues: 3-hydroxyacyl-[acyl-carrier-protein] dehydratase FabZ (157 aa).

Residue His58 is part of the active site.

This sequence belongs to the thioester dehydratase family. FabZ subfamily.

It localises to the cytoplasm. The catalysed reaction is a (3R)-hydroxyacyl-[ACP] = a (2E)-enoyl-[ACP] + H2O. In terms of biological role, involved in unsaturated fatty acids biosynthesis. Catalyzes the dehydration of short chain beta-hydroxyacyl-ACPs and long chain saturated and unsaturated beta-hydroxyacyl-ACPs. The polypeptide is 3-hydroxyacyl-[acyl-carrier-protein] dehydratase FabZ (Brucella ovis (strain ATCC 25840 / 63/290 / NCTC 10512)).